Here is a 389-residue protein sequence, read N- to C-terminus: tRNA-specific 2-thiouridylase MnmA (389 aa).

Residues 35-42 and Met-61 contribute to the ATP site; that span reads GMSGGVDS. The interval 121-123 is interaction with target base in tRNA; the sequence is NPD. The active-site Nucleophile is Cys-126. Cysteines 126 and 223 form a disulfide. Position 151 (Gly-151) interacts with ATP. Positions 173–175 are interaction with tRNA; that stretch reads KDQ. Catalysis depends on Cys-223, which acts as the Cysteine persulfide intermediate. The segment at 335–336 is interaction with tRNA; sequence RY.

This sequence belongs to the MnmA/TRMU family.

It localises to the cytoplasm. The enzyme catalyses S-sulfanyl-L-cysteinyl-[protein] + uridine(34) in tRNA + AH2 + ATP = 2-thiouridine(34) in tRNA + L-cysteinyl-[protein] + A + AMP + diphosphate + H(+). Its function is as follows. Catalyzes the 2-thiolation of uridine at the wobble position (U34) of tRNA, leading to the formation of s(2)U34. The polypeptide is tRNA-specific 2-thiouridylase MnmA (Actinobacillus pleuropneumoniae serotype 3 (strain JL03)).